The chain runs to 236 residues: 2-C-methyl-D-erythritol 4-phosphate cytidylyltransferase (236 aa).

It belongs to the IspD/TarI cytidylyltransferase family. IspD subfamily.

It catalyses the reaction 2-C-methyl-D-erythritol 4-phosphate + CTP + H(+) = 4-CDP-2-C-methyl-D-erythritol + diphosphate. Its pathway is isoprenoid biosynthesis; isopentenyl diphosphate biosynthesis via DXP pathway; isopentenyl diphosphate from 1-deoxy-D-xylulose 5-phosphate: step 2/6. Functionally, catalyzes the formation of 4-diphosphocytidyl-2-C-methyl-D-erythritol from CTP and 2-C-methyl-D-erythritol 4-phosphate (MEP). The chain is 2-C-methyl-D-erythritol 4-phosphate cytidylyltransferase from Azoarcus sp. (strain BH72).